The sequence spans 440 residues: DNA polymerase delta small subunit (440 aa).

This sequence belongs to the DNA polymerase delta/II small subunit family. As to quaternary structure, heterodimer with subunits of 125 kDa and 50 kDa.

Its subcellular location is the nucleus. It carries out the reaction DNA(n) + a 2'-deoxyribonucleoside 5'-triphosphate = DNA(n+1) + diphosphate. The function of the small subunit is not yet clear. The protein is DNA polymerase delta small subunit (POLD2) of Arabidopsis thaliana (Mouse-ear cress).